Reading from the N-terminus, the 111-residue chain is Ribonuclease P protein component (111 aa).

It belongs to the RnpA family. Consists of a catalytic RNA component (M1 or rnpB) and a protein subunit.

It carries out the reaction Endonucleolytic cleavage of RNA, removing 5'-extranucleotides from tRNA precursor.. In terms of biological role, RNaseP catalyzes the removal of the 5'-leader sequence from pre-tRNA to produce the mature 5'-terminus. It can also cleave other RNA substrates such as 4.5S RNA. The protein component plays an auxiliary but essential role in vivo by binding to the 5'-leader sequence and broadening the substrate specificity of the ribozyme. The sequence is that of Ribonuclease P protein component from Clostridium botulinum (strain 657 / Type Ba4).